A 398-amino-acid chain; its full sequence is Elongation factor Tu (398 aa).

A tr-type G domain is found at 10-207; sequence KPHVNIGTIG…TVDEYIPEPE (198 aa). The segment at 19-26 is G1; the sequence is GHVDHGKT. 19 to 26 contributes to the GTP binding site; that stretch reads GHVDHGKT. Thr26 lines the Mg(2+) pocket. Positions 63–67 are G2; it reads GITIN. The interval 84-87 is G3; it reads DAPG. GTP-binding positions include 84–88 and 139–142; these read DAPGH and NKVD. The interval 139-142 is G4; the sequence is NKVD. Residues 177 to 179 are G5; that stretch reads SAL.

This sequence belongs to the TRAFAC class translation factor GTPase superfamily. Classic translation factor GTPase family. EF-Tu/EF-1A subfamily. As to quaternary structure, monomer.

The protein localises to the cytoplasm. It carries out the reaction GTP + H2O = GDP + phosphate + H(+). Its function is as follows. GTP hydrolase that promotes the GTP-dependent binding of aminoacyl-tRNA to the A-site of ribosomes during protein biosynthesis. The sequence is that of Elongation factor Tu from Streptococcus pneumoniae serotype 4 (strain ATCC BAA-334 / TIGR4).